Reading from the N-terminus, the 340-residue chain is MAITVYYDKDCDLSLIRSKKVAIIGFGSQGHAHAENLRDSGVDVVVGLNPKGKSWAKAEAKGFKVMSVSEATKYADLIMILTPDEFQADIFKAEIEPNLSEGNAIAFGHGFNIHYGQIIPPKGIDCIMIAPKAPGHTVRNEFVNGGGIPDLIAVSQDATGKAKDLALSYASAIGGGRTGIIETTFKAETETDLFGEQAVLCGGLCALINAGFETLTEAGYEPEMAYFECLHEMKLIVDLIYQGGMADMRYSISNTAEYGDYVSGVRVVNESSKAAMKAILKEIQDGTFAKNFILERKAGYTKMNAERKISEASLLNKTGEKLRGMMPWINKGRLVNKDKN.

Positions 1 to 183 constitute a KARI N-terminal Rossmann domain; that stretch reads MAITVYYDKD…GGGRTGIIET (183 aa). NADP(+) is bound by residues 26-29, S54, and 84-87; these read FGSQ and DEFQ. H109 is an active-site residue. Position 135 (G135) interacts with NADP(+). In terms of domain architecture, KARI C-terminal knotted spans 184–329; it reads TFKAETETDL…EKLRGMMPWI (146 aa). The Mg(2+) site is built by D192, E196, E228, and E232. Residue S253 coordinates substrate.

This sequence belongs to the ketol-acid reductoisomerase family. It depends on Mg(2+) as a cofactor.

The catalysed reaction is (2R)-2,3-dihydroxy-3-methylbutanoate + NADP(+) = (2S)-2-acetolactate + NADPH + H(+). It carries out the reaction (2R,3R)-2,3-dihydroxy-3-methylpentanoate + NADP(+) = (S)-2-ethyl-2-hydroxy-3-oxobutanoate + NADPH + H(+). It functions in the pathway amino-acid biosynthesis; L-isoleucine biosynthesis; L-isoleucine from 2-oxobutanoate: step 2/4. It participates in amino-acid biosynthesis; L-valine biosynthesis; L-valine from pyruvate: step 2/4. In terms of biological role, involved in the biosynthesis of branched-chain amino acids (BCAA). Catalyzes an alkyl-migration followed by a ketol-acid reduction of (S)-2-acetolactate (S2AL) to yield (R)-2,3-dihydroxy-isovalerate. In the isomerase reaction, S2AL is rearranged via a Mg-dependent methyl migration to produce 3-hydroxy-3-methyl-2-ketobutyrate (HMKB). In the reductase reaction, this 2-ketoacid undergoes a metal-dependent reduction by NADPH to yield (R)-2,3-dihydroxy-isovalerate. The chain is Ketol-acid reductoisomerase (NADP(+)) from Campylobacter fetus subsp. fetus (strain 82-40).